A 530-amino-acid polypeptide reads, in one-letter code: Ubiquitin carboxyl-terminal hydrolase 17-like protein 13 (530 aa).

One can recognise a USP domain in the interval 80–375 (AGLQNMGNTC…QAYVLFYIQK (296 aa)). Residue C89 is the Nucleophile of the active site. Catalysis depends on H334, which acts as the Proton acceptor. Composition is skewed to basic and acidic residues over residues 382-392 (SESVSRGREPR) and 398-412 (DTDRRATQGELKRDH). Disordered stretches follow at residues 382–412 (SESVSRGREPRALGAEDTDRRATQGELKRDH) and 477–530 (NHHP…LVCQ). Polar residues predominate over residues 493–505 (TPTHQESMNTGTL). Positions 510 to 524 (GRARRSKGKNKHSKR) are enriched in basic residues.

The protein belongs to the peptidase C19 family. USP17 subfamily.

The protein localises to the nucleus. Its subcellular location is the endoplasmic reticulum. The enzyme catalyses Thiol-dependent hydrolysis of ester, thioester, amide, peptide and isopeptide bonds formed by the C-terminal Gly of ubiquitin (a 76-residue protein attached to proteins as an intracellular targeting signal).. In terms of biological role, deubiquitinating enzyme that removes conjugated ubiquitin from specific proteins to regulate different cellular processes that may include cell proliferation, progression through the cell cycle, apoptosis, cell migration, and the cellular response to viral infection. This Homo sapiens (Human) protein is Ubiquitin carboxyl-terminal hydrolase 17-like protein 13 (USP17L13).